Reading from the N-terminus, the 171-residue chain is Laminin subunit beta-1 (171 aa).

The first 29 residues, 1 to 29, serve as a signal peptide directing secretion; the sequence is MNGRTQNLWFSTFRLVIVYALFFAKLCFG. 5 cysteine pairs are disulfide-bonded: C59-C69, C72-C81, C84-C100, C103-C118, and C105-C128. 3 consecutive Laminin EGF-like domains span residues 66-102, 103-160, and 161-171; these read TGVC…VCQR, CQCP…TCKK, and CLCNGNINSAS. N130 carries an N-linked (GlcNAc...) asparagine glycan. 2 disulfides stabilise this stretch: C131–C140 and C143–C158.

Laminin is a complex glycoprotein, consisting of three different polypeptide chains (alpha, beta, gamma), which are bound to each other by disulfide bonds into a cross-shaped molecule comprising one long and three short arms with globules at each end.

The protein resides in the secreted. It localises to the extracellular space. It is found in the extracellular matrix. Its subcellular location is the basement membrane. Binding to cells via a high affinity receptor, laminin is thought to mediate the attachment, migration and organization of cells into tissues during embryonic development by interacting with other extracellular matrix components. This Hydra vulgaris (Hydra) protein is Laminin subunit beta-1.